A 280-amino-acid chain; its full sequence is Succinate dehydrogenase [ubiquinone] iron-sulfur subunit, mitochondrial (280 aa).

Residues 1–28 constitute a mitochondrion transit peptide; that stretch reads MAAVVAVSLKRWFPATTLGGACLQACRG. The 2Fe-2S ferredoxin-type domain maps to 40-131; sequence KKFAIYRWDP…DKVSKIYPLP (92 aa). N6-acetyllysine is present on residues Lys51 and Lys55. Cys93, Cys98, Cys101, and Cys113 together coordinate [2Fe-2S] cluster. An interaction with SDHAF1 region spans residues 146–218; sequence FYAQYKSIEP…PAVLMQAYRW (73 aa). The 31-residue stretch at 176–206 folds into the 4Fe-4S ferredoxin-type domain; it reads EREKLDGLYECILCACCSTSCPSYWWNGDKY. Cys186, Cys189, and Cys192 together coordinate [4Fe-4S] cluster. Cys196 provides a ligand contact to [3Fe-4S] cluster. Residue Trp201 coordinates a ubiquinone. Residues Cys243 and Cys249 each contribute to the [3Fe-4S] cluster site. Cys253 serves as a coordination point for [4Fe-4S] cluster.

This sequence belongs to the succinate dehydrogenase/fumarate reductase iron-sulfur protein family. In terms of assembly, component of complex II composed of four subunits: the flavoprotein (FP) SDHA, iron-sulfur protein (IP) SDHB, and a cytochrome b560 composed of SDHC and SDHD. Interacts with SDHAF1; the interaction is required for iron-sulfur cluster incorporation into SDHB. [2Fe-2S] cluster serves as cofactor. The cofactor is [3Fe-4S] cluster. Requires [4Fe-4S] cluster as cofactor.

It is found in the mitochondrion inner membrane. The enzyme catalyses a quinone + succinate = fumarate + a quinol. It catalyses the reaction (R)-malate + a quinone = enol-oxaloacetate + a quinol. The catalysed reaction is (S)-malate + a quinone = enol-oxaloacetate + a quinol. It functions in the pathway carbohydrate metabolism; tricarboxylic acid cycle; fumarate from succinate (eukaryal route): step 1/1. Its activity is regulated as follows. Enol-oxaloacetate inhibits the succinate dehydrogenase activity. Iron-sulfur protein (IP) subunit of the succinate dehydrogenase complex (mitochondrial respiratory chain complex II), responsible for transferring electrons from succinate to ubiquinone (coenzyme Q). SDH also oxidizes malate to the non-canonical enol form of oxaloacetate, enol-oxaloacetate. Enol-oxaloacetate, which is a potent inhibitor of the succinate dehydrogenase activity, is further isomerized into keto-oxaloacetate. In Sus scrofa (Pig), this protein is Succinate dehydrogenase [ubiquinone] iron-sulfur subunit, mitochondrial (SDHB).